Here is a 451-residue protein sequence, read N- to C-terminus: UDP-N-acetylmuramate--L-alanine ligase (451 aa).

ATP is bound at residue 110 to 116; sequence GTHGKTT.

The protein belongs to the MurCDEF family.

The protein localises to the cytoplasm. It catalyses the reaction UDP-N-acetyl-alpha-D-muramate + L-alanine + ATP = UDP-N-acetyl-alpha-D-muramoyl-L-alanine + ADP + phosphate + H(+). Its pathway is cell wall biogenesis; peptidoglycan biosynthesis. Its function is as follows. Cell wall formation. This chain is UDP-N-acetylmuramate--L-alanine ligase, found in Francisella tularensis subsp. tularensis (strain WY96-3418).